The chain runs to 5112 residues: Malformin synthetase mlfA (5112 aa).

Residues 225 to 616 are adenylation 1; that stretch reads ERHAANRPHS…CGRADTQVKL (392 aa). A Carrier 1 domain is found at 757 to 830; it reads SRLEQEIQLA…EAASLAEVQE (74 aa). The residue at position 791 (Ser791) is an O-(pantetheine 4'-phosphoryl)serine. Residues 868-1299 are condensation 1; sequence EDVFPCTTMQ…ALDSLTLLQA (432 aa). The segment at 1327-1716 is adenylation 2; it reads DRRVTRQPDT…GRKDTQVKLR (390 aa). The region spanning 1854-1931 is the Carrier 2 domain; sequence TAASELERTL…QLAAELGESP (78 aa). Ser1891 is modified (O-(pantetheine 4'-phosphoryl)serine). Disordered regions lie at residues 1926 to 1961 and 1994 to 2034; these read ELGESPRSSTSSASSSTEDEFTISTPDDSSTNDGVD and GGSS…VPEP. 2 stretches are compositionally biased toward low complexity: residues 1930–1941 and 1994–2012; these read SPRSSTSSASSS and GGSSSSKTPSVSSSSSSSS. The tract at residues 2064 to 2479 is condensation 2; that stretch reads EDIYPATALQ…AVSYSDKQTL (416 aa). Residues 2502–2894 form an adenylation 3 region; the sequence is IRTPHAPAVC…IGRRDGQVKL (393 aa). A Carrier 3 domain is found at 3030-3106; that stretch reads RPTTAKECEM…QLLFHLRNAK (77 aa). An O-(pantetheine 4'-phosphoryl)serine modification is found at Ser3067. 2 condensation regions span residues 3122–3586 and 3607–4044; these read WVDL…TYEQ and NIYP…EQLV. The interval 4069-4459 is adenylation 4; it reads HSSRQAVCAW…VGRKDNQIKF (391 aa). Residues 4593-4669 enclose the Carrier 4 domain; the sequence is MPSTEAECIM…DLARHNSLVQ (77 aa). Ser4630 is modified (O-(pantetheine 4'-phosphoryl)serine). The interval 4724 to 5106 is condensation 5; it reads IVVDIPGRIS…VEKVVALLRD (383 aa).

Belongs to the NRP synthetase family.

It participates in secondary metabolite biosynthesis. Functionally, nonribosomal peptide synthetase; part of the gene cluster that mediates the biosynthesis of malformins, cyclic pentapeptides with a disulfide bond between 2 consecutive cysteins, that show potential anti-tumor as well as antimalarial and antitrypanosomal properties. The nonribosomal peptide synthetase mlfA is responsible of the formation of the cyclic pentapeptide. MlfA probably acts iteratively on one amino acid and possesses multiple amino acid specificities since it is involved in the biosynthesis of multiple malformins, including malformin C and malformin A2. Malformin C corresponds to a cyclo[D-Cys-D-Cys-Val-D-Leu-Val] pentapeptide whereas malformin A2 corresponds to a cyclo[D-Cys-D-Cys-Val-D-Leu-Ile] pentapeptide. The malformin biosynthesis clusters in malformin-producing fungi also contain enzymes involved in the formation of the disulfide bond between the two consecutive cysteins within malformins, in addition to additional tailoring enzymes such as methyltransferases or oxidoreductases. They are also composed of up to 4 major facilitator superfamily transporters, and transcription factors probably involved in the regulation of the expression of those clusters. The protein is Malformin synthetase mlfA of Aspergillus brasiliensis (strain CBS 101740 / IMI 381727 / IBT 21946).